The sequence spans 252 residues: MKIKMRGQDVKVFYKDKEALHGITLDIPEHKVTALIGPSGCGKSTFLRCFNRMNDTIEGAKITGLITLDGENIYDSQIDVVELRARVGMVFQKPCPFPKSIFENVAYGPRIHGLVKSRAELHDIVEKSLRQAGLFEEVKDRLHEAGTSLSGGQQQRLCIARAIAVSPEVILMDEPCSALDPIATARIEELIDALRKDYTIVIVTHSMQQAARVSQYTAMFHLGHLVEVGATEMIFTSPKEQRTQDYITGRFG.

Residues 5–247 enclose the ABC transporter domain; sequence MRGQDVKVFY…PKEQRTQDYI (243 aa). 37–44 is a binding site for ATP; that stretch reads GPSGCGKS.

It belongs to the ABC transporter superfamily. Phosphate importer (TC 3.A.1.7) family. The complex is composed of two ATP-binding proteins (PstB), two transmembrane proteins (PstC and PstA) and a solute-binding protein (PstS).

The protein localises to the cell inner membrane. The catalysed reaction is phosphate(out) + ATP + H2O = ADP + 2 phosphate(in) + H(+). In terms of biological role, part of the ABC transporter complex PstSACB involved in phosphate import. Responsible for energy coupling to the transport system. This Bartonella quintana (strain Toulouse) (Rochalimaea quintana) protein is Phosphate import ATP-binding protein PstB.